A 188-amino-acid polypeptide reads, in one-letter code: MAAAEKPVLSRYRDRMDKAVSALKEEFGSLRTGRASASLLDQVMVEAYGSTTPLNAVASVSVPEPRQINVSVWDRGVVVSVEKAIRASGLGLNPVVEGQNLRIPIPPLTEERRRDLQKIAGKYAEQQKIAVRNVRRDANDDLKKAEKDGAIAEDERKKMETEVQKMTDDAIKRIDEALKTKEHEIMQV.

It belongs to the RRF family.

The protein resides in the cytoplasm. In terms of biological role, responsible for the release of ribosomes from messenger RNA at the termination of protein biosynthesis. May increase the efficiency of translation by recycling ribosomes from one round of translation to another. In Caulobacter vibrioides (strain NA1000 / CB15N) (Caulobacter crescentus), this protein is Ribosome-recycling factor.